The following is a 138-amino-acid chain: Putative pre-16S rRNA nuclease (138 aa).

Belongs to the YqgF nuclease family.

The protein resides in the cytoplasm. Functionally, could be a nuclease involved in processing of the 5'-end of pre-16S rRNA. The protein is Putative pre-16S rRNA nuclease of Glaesserella parasuis serovar 5 (strain SH0165) (Haemophilus parasuis).